We begin with the raw amino-acid sequence, 452 residues long: Chaperone SurA (452 aa).

Residues 1 to 28 (MKKTLRFAAVVSSLAASAALLVAAPAAA) form the signal peptide. 2 consecutive PpiC domains span residues 186–288 (QQDL…RLVD) and 302–400 (IVQT…QVLN).

It localises to the periplasm. It carries out the reaction [protein]-peptidylproline (omega=180) = [protein]-peptidylproline (omega=0). In terms of biological role, chaperone involved in the correct folding and assembly of outer membrane proteins. Recognizes specific patterns of aromatic residues and the orientation of their side chains, which are found more frequently in integral outer membrane proteins. May act in both early periplasmic and late outer membrane-associated steps of protein maturation. The protein is Chaperone SurA of Burkholderia orbicola (strain AU 1054).